The chain runs to 150 residues: MEIQTKTLGTQTVEAHQIITLERGLYGFEKYHRFALFDAVQVPFIHMQSLDDPALSFIAIDPFLFRPDYELDIDDVLLQPLDISSPTDVLVFALVTIPPDGSAVTANLQGPLIVNKKNRKAMQVAMGGDRWRTKHDIVAEMAERRAQEQC.

Belongs to the FliW family. In terms of assembly, interacts with translational regulator CsrA. Interacts with flagellins FlaB1, FlaB2 and FlaB3.

The protein localises to the cytoplasm. Acts as an anti-CsrA protein, binds CsrA and prevents it from repressing translation of its target genes, one of which is flagellin. Binds to flagellin and participates in the assembly of the flagellum. Functionally, binds to the C-terminal region of flagellin, which is implicated in polymerization, and participates in the assembly of the flagellum. This Treponema pallidum (strain Nichols) protein is Flagellar assembly factor FliW.